Consider the following 494-residue polypeptide: Rhamnulokinase (494 aa).

An ATP-binding site is contributed by 18 to 22; sequence ASSGR. Substrate-binding positions include G87 and 242 to 244; that span reads HDT. D243 (proton acceptor) is an active-site residue. An ATP-binding site is contributed by T265. N302 lines the substrate pocket. Residue Q310 coordinates ATP. C360 and C377 are disulfide-bonded. An ATP-binding site is contributed by G411.

It belongs to the rhamnulokinase family. Requires Mg(2+) as cofactor.

The enzyme catalyses L-rhamnulose + ATP = L-rhamnulose 1-phosphate + ADP + H(+). Its pathway is carbohydrate degradation; L-rhamnose degradation; glycerone phosphate from L-rhamnose: step 2/3. Functionally, involved in the catabolism of L-rhamnose (6-deoxy-L-mannose). Catalyzes the transfer of the gamma-phosphate group from ATP to the 1-hydroxyl group of L-rhamnulose to yield L-rhamnulose 1-phosphate. In Enterococcus faecalis (strain ATCC 700802 / V583), this protein is Rhamnulokinase.